The sequence spans 384 residues: Gastrin-releasing peptide receptor (384 aa).

The Extracellular segment spans residues 1–38 (MALNDCFLLNLEVDHFMHCNISSHSADLPVNDDWSHPG). N-linked (GlcNAc...) asparagine glycosylation occurs at Asn-20. A helical membrane pass occupies residues 39–62 (ILYVIPAVYGVIILIGLIGNITLI). Residues 63 to 76 (KIFCTVKSMRNVPN) are Cytoplasmic-facing. A helical membrane pass occupies residues 77-96 (LFISSLALGDLLLLITCAPV). The Extracellular segment spans residues 97–114 (DASRYLADRWLFGRIGCK). Cysteines 113 and 196 form a disulfide. A helical transmembrane segment spans residues 115-136 (LIPFIQLTSVGVSVFTLTALSA). The Cytoplasmic portion of the chain corresponds to 137–152 (DRYKAIVRPMDIQASH). Residues 153 to 174 (ALMKICLKAAFIWIISMLLAIP) form a helical membrane-spanning segment. At 175 to 208 (EAVFSDLHPFHEESTNQTFISCAPYPHSNELHPK) the chain is on the extracellular side. Residues 209–234 (IHSMASFLVFYVIPLSIISVYYYFIA) traverse the membrane as a helical segment. Topologically, residues 235-264 (KNLIQSAYNLPVEGNIHVKKQIESRKRLAK) are cytoplasmic. The helical transmembrane segment at 265–285 (TVLVFVGLFAFCWLPNHVIYL) threads the bilayer. Residues 286-298 (YRSYHYSEVDTSM) lie on the Extracellular side of the membrane. A helical membrane pass occupies residues 299–325 (LHFVTSICARLLAFTNSCVNPFALYLL). Over 326–384 (SKSFRKQFNTQLLCCQPGLIIRSHSTGRSTTCMTSLKSTNPSVATFSLINGNICHERYV) the chain is Cytoplasmic. Cys-339 is lipidated: S-palmitoyl cysteine. Ser-350 carries the phosphoserine modification.

It belongs to the G-protein coupled receptor 1 family. As to expression, highly expressed in pancreas. Also expressed in stomach, adrenal cortex and brain. In brain, expressed in cells throughout the cortex.

It localises to the cell membrane. In terms of biological role, receptor for gastrin-releasing peptide (GRP). Signals via association with G proteins that activate a phosphatidylinositol-calcium second messenger system, resulting in Akt phosphorylation. Contributes to the regulation of food intake. Contributes to the perception of prurient stimuli and transmission of itch signals in the spinal cord that promote scratching behavior, but does not play a role in the perception of pain. Contributes primarily to nonhistaminergic itch sensation. In one study, shown to act in the amygdala as part of an inhibitory network which inhibits memory specifically related to learned fear. In another study, shown to contribute to disinhibition of glutamatergic cells in the auditory cortex via signaling on vasoactive intestinal peptide-expressing cells which leads to enhanced auditory fear memories. Contributes to the induction of sighing through signaling in the pre-Botzinger complex, a cluster of several thousand neurons in the ventrolateral medulla responsible for inspiration during respiratory activity. In Homo sapiens (Human), this protein is Gastrin-releasing peptide receptor (GRPR).